The chain runs to 592 residues: E3 ubiquitin-protein ligase RNF180 (592 aa).

At 1–564 (MKRSKELITK…DSRGWWFDMD (564 aa)) the chain is on the cytoplasmic side. S230 is modified (phosphoserine). The RING-type zinc-finger motif lies at 432-474 (CAVCLDVYFNPYMCYPCRHIFCEPCLRTLAKDNPSSTPCPLCR). A helical transmembrane segment spans residues 565–585 (MVIIYIYSVNWVIGFIVFCFL). The Extracellular portion of the chain corresponds to 586–592 (CYFFFPF).

Interacts with ZIC2.

Its subcellular location is the endoplasmic reticulum membrane. It is found in the nucleus envelope. It catalyses the reaction S-ubiquitinyl-[E2 ubiquitin-conjugating enzyme]-L-cysteine + [acceptor protein]-L-lysine = [E2 ubiquitin-conjugating enzyme]-L-cysteine + N(6)-ubiquitinyl-[acceptor protein]-L-lysine.. It functions in the pathway protein modification; protein ubiquitination. E3 ubiquitin-protein ligase which promotes polyubiquitination and degradation by the proteasome pathway of ZIC2. This chain is E3 ubiquitin-protein ligase RNF180 (RNF180), found in Pongo abelii (Sumatran orangutan).